The following is a 384-amino-acid chain: Chaperone protein DnaJ (384 aa).

The 66-residue stretch at 5–70 (DYYEVLGVSK…DKKAAYDRYG (66 aa)) folds into the J domain. The interval 16–47 (ASSDDIKKGYRRKAKELHPDRNKDDPNAEAQF) is disordered. Residues 31-47 (ELHPDRNKDDPNAEAQF) show a composition bias toward basic and acidic residues. The segment at 143–221 (GLQKTINVPT…CQGAGRVEKD (79 aa)) adopts a CR-type zinc-finger fold. Positions 156, 159, 173, 176, 195, 198, 209, and 212 each coordinate Zn(2+). 4 CXXCXGXG motif repeats span residues 156-163 (CKTCNGSG), 173-180 (CPTCSGMG), 195-202 (CPTCSGLG), and 209-216 (CKSCQGAG).

It belongs to the DnaJ family. As to quaternary structure, homodimer. Zn(2+) serves as cofactor.

It localises to the cytoplasm. Participates actively in the response to hyperosmotic and heat shock by preventing the aggregation of stress-denatured proteins and by disaggregating proteins, also in an autonomous, DnaK-independent fashion. Unfolded proteins bind initially to DnaJ; upon interaction with the DnaJ-bound protein, DnaK hydrolyzes its bound ATP, resulting in the formation of a stable complex. GrpE releases ADP from DnaK; ATP binding to DnaK triggers the release of the substrate protein, thus completing the reaction cycle. Several rounds of ATP-dependent interactions between DnaJ, DnaK and GrpE are required for fully efficient folding. Also involved, together with DnaK and GrpE, in the DNA replication of plasmids through activation of initiation proteins. The chain is Chaperone protein DnaJ from Roseobacter denitrificans (strain ATCC 33942 / OCh 114) (Erythrobacter sp. (strain OCh 114)).